A 543-amino-acid chain; its full sequence is Exodeoxyribonuclease 7 large subunit (543 aa).

Residues 498-543 (VTGEGDKASPPPQAASATTTPAPGRPNPLPKSPKKSEPPAGQGSLF) are disordered.

Belongs to the XseA family. In terms of assembly, heterooligomer composed of large and small subunits.

Its subcellular location is the cytoplasm. The enzyme catalyses Exonucleolytic cleavage in either 5'- to 3'- or 3'- to 5'-direction to yield nucleoside 5'-phosphates.. Its function is as follows. Bidirectionally degrades single-stranded DNA into large acid-insoluble oligonucleotides, which are then degraded further into small acid-soluble oligonucleotides. The protein is Exodeoxyribonuclease 7 large subunit of Allorhizobium ampelinum (strain ATCC BAA-846 / DSM 112012 / S4) (Agrobacterium vitis (strain S4)).